The chain runs to 163 residues: Nucleotide-binding protein NT01EI_1072 (163 aa).

This sequence belongs to the YajQ family.

Nucleotide-binding protein. The polypeptide is Nucleotide-binding protein NT01EI_1072 (Edwardsiella ictaluri (strain 93-146)).